Here is a 572-residue protein sequence, read N- to C-terminus: Phospholipase B-like protein B (572 aa).

Residues Met1–Cys28 form the signal peptide. Residues Asn73, Asn138, Asn219, Asn427, Asn544, and Asn564 are each glycosylated (N-linked (GlcNAc...) asparagine).

The protein belongs to the phospholipase B-like family.

The protein resides in the secreted. Functionally, probable phospholipase. The sequence is that of Phospholipase B-like protein B (plbB) from Dictyostelium discoideum (Social amoeba).